A 91-amino-acid polypeptide reads, in one-letter code: C-C motif chemokine 5 (91 aa).

A signal peptide spans 1–23; that stretch reads MKVSAARLAVILVATALCAPASA. Cystine bridges form between Cys33–Cys57 and Cys34–Cys73.

The protein belongs to the intercrine beta (chemokine CC) family.

It localises to the secreted. In terms of biological role, chemoattractant for blood monocytes, memory T-helper cells and eosinophils. Causes the release of histamine from basophils and activates eosinophils. May activate several chemokine receptors including CCR1, CCR3, CCR4 and CCR5. May also be an agonist of the G protein-coupled receptor GPR75. Together with GPR75, may play a role in neuron survival through activation of a downstream signaling pathway involving the PI3, Akt and MAP kinases. By activating GPR75 may also play a role in insulin secretion by islet cells. The polypeptide is C-C motif chemokine 5 (CCL5) (Macaca mulatta (Rhesus macaque)).